We begin with the raw amino-acid sequence, 825 residues long: Translation initiation factor IF-2 (825 aa).

4 stretches are compositionally biased toward basic and acidic residues: residues 1–19 (MTKK…DNKK), 35–45 (RKGEKKTEGKR), 70–98 (LLKD…EYKK), and 113–122 (KKVESVEKPA). The tract at residues 1-239 (MTKKQENETS…TQRKDRPLPE (239 aa)) is disordered. Positions 158 to 169 (PSSSRRPSSRPS) are enriched in low complexity. Residues 181-191 (GRRRKSGKPGR) show a composition bias toward basic residues. Polar residues predominate over residues 194–208 (QNSYADQGRGANSNR). The segment covering 211-220 (QRKRKNKKHQ) has biased composition (basic residues). The tr-type G domain maps to 326–495 (VRPPVVTIMG…ILEADMLELK (170 aa)). The G1 stretch occupies residues 335–342 (GHVDHGKT). 335-342 (GHVDHGKT) is a GTP binding site. Residues 360–364 (GITQN) are G2. A G3 region spans residues 381–384 (DTPG). GTP is bound by residues 381–385 (DTPGH) and 435–438 (NKMD). The interval 435–438 (NKMD) is G4. The G5 stretch occupies residues 471–473 (SAK).

Belongs to the TRAFAC class translation factor GTPase superfamily. Classic translation factor GTPase family. IF-2 subfamily.

It localises to the cytoplasm. Functionally, one of the essential components for the initiation of protein synthesis. Protects formylmethionyl-tRNA from spontaneous hydrolysis and promotes its binding to the 30S ribosomal subunits. Also involved in the hydrolysis of GTP during the formation of the 70S ribosomal complex. This is Translation initiation factor IF-2 from Lactobacillus delbrueckii subsp. bulgaricus (strain ATCC 11842 / DSM 20081 / BCRC 10696 / JCM 1002 / NBRC 13953 / NCIMB 11778 / NCTC 12712 / WDCM 00102 / Lb 14).